A 109-amino-acid chain; its full sequence is Cell division protein ZapA (109 aa).

The stretch at 21-99 (PEQQDALNQA…IEQALLEQGR (79 aa)) forms a coiled coil.

Belongs to the ZapA family. Type 1 subfamily. Homodimer. Interacts with FtsZ.

The protein resides in the cytoplasm. In terms of biological role, activator of cell division through the inhibition of FtsZ GTPase activity, therefore promoting FtsZ assembly into bundles of protofilaments necessary for the formation of the division Z ring. It is recruited early at mid-cell but it is not essential for cell division. In Pectobacterium carotovorum subsp. carotovorum (strain PC1), this protein is Cell division protein ZapA.